Here is a 579-residue protein sequence, read N- to C-terminus: MFS-type transporter sphD (579 aa).

The tract at residues 17–62 is disordered; sequence SAFAVRAEPDSEPVSEKQGTAETDAETGAGGTEVPAERNGEDDVER. Residues 51–62 show a composition bias toward basic and acidic residues; that stretch reads PAERNGEDDVER. 8 helical membrane-spanning segments follow: residues 73 to 93, 110 to 130, 138 to 158, 168 to 188, 200 to 220, 227 to 247, 267 to 287, and 294 to 314; these read AFIG…ALGI, FWAN…WASI, PPLY…AVAQ, VLQG…LADM, LMAI…ALFA, WIGW…FFFL, WIGM…LSWA, and GAWQ…IFAF. N-linked (GlcNAc...) asparagine glycosylation occurs at asparagine 335. 6 helical membrane-spanning segments follow: residues 338–358, 367–391, 398–419, 429–449, 460–480, and 541–561; these read LVGG…LPLI, AILS…SMML, YVWI…LALF, LGLP…LLPM, GLAI…GLTI, and FQTI…TSLF.

The protein belongs to the major facilitator superfamily.

Its subcellular location is the membrane. Its function is as follows. MFS-type transporter; part of the gene cluster that mediates the biosynthesis of sphingofungins, bioactive molecules acting as sphingolipid inhibitors via inhibiting serine palmitoyl transferase (SPT). The sequence is that of MFS-type transporter sphD from Aspergillus fumigatus (strain CBS 144.89 / FGSC A1163 / CEA10) (Neosartorya fumigata).